Consider the following 473-residue polypeptide: Mitochondrial adenyl nucleotide antiporter SLC25A24-A (473 aa).

Positions 1–173 are regulatory N-terminal domain; that stretch reads MLEQVQKFLL…RFWKHSTVLD (173 aa). At 1-197 the chain is on the mitochondrial intermembrane side; the sequence is MLEQVQKFLL…EKKTGQWWKH (197 aa). 4 EF-hand domains span residues 19–54, 55–88, 86–121, and 122–157; these read DSHTRYAELFHKLDVNKDGKVDILELQEGLKAMGMA, VGKGAEEKIVEAGDTNKDGHLDFGEFMRYLEEHE, EHEKKMKIAFTSLDKNKDGKIESSEVMNSLKTLGIN, and ISLDHAEKILKSMDSDGTLTVDWNEWRDHFLFNPAD. Ca(2+)-binding residues include Asp32, Asn34, Asp36, Lys38, Glu43, Asp68, Asn70, Asp72, His74, Glu79, Asp99, Asn101, Asp103, Lys105, Glu110, Asp135, Asp137, Thr139, Thr141, and Glu146. Positions 159–168 are linker region; that stretch reads IQQIIRFWKH. Residues 174–473 form a C-terminal transmembrane transporter domain region; sequence IGDSLTIPDE…YEKMKIQLGI (300 aa). Solcar repeat units lie at residues 192–277, 285–370, and 382–470; these read GQWW…YKKL, LGTA…LKNY, and PGVL…MKIQ. A helical transmembrane segment spans residues 198 to 215; it reads LLAGGMAGAVSRTGTAPL. Over 216 to 251 the chain is Mitochondrial matrix; it reads DRLKVMMQVHGTKGNSNIITGLKQMVKEGGVRSLWR. Residues 252–271 traverse the membrane as a helical segment; the sequence is GNGVNVIKIAPETAMKFWAY. Topologically, residues 272–294 are mitochondrial intermembrane; it reads EQYKKLFTSESGKLGTAERFIAG. The chain crosses the membrane as a helical span at residues 295–308; that stretch reads SLAGATAQTSIYPM. Over 309–344 the chain is Mitochondrial matrix; that stretch reads EVLKTRLAVGKTGQYSGMFDCAKKIMQKEGILAFYK. Residues 345–364 traverse the membrane as a helical segment; it reads GYIPNILGIIPYAGIDLAIY. Over 365-387 the chain is Mitochondrial intermembrane; sequence ETLKNYWLQNYAKDSANPGVLVL. Residues 388-405 form a helical membrane-spanning segment; it reads LGCGTVSSTCGQLASYPL. At 406–444 the chain is on the mitochondrial matrix side; sequence ALIRTRMQAQASIEGAPQLNMGGLFRKIVAKEGFFGLYT. Residues 445-464 traverse the membrane as a helical segment; sequence GIAPNFLKVLPAVSISYVVY. The Mitochondrial intermembrane segment spans residues 465-473; it reads EKMKIQLGI.

It belongs to the mitochondrial carrier (TC 2.A.29) family. In terms of assembly, monomer.

The protein resides in the mitochondrion inner membrane. It carries out the reaction Mg(2+)(out) + phosphate(in) + ATP(out) = Mg(2+)(in) + phosphate(out) + ATP(in). It catalyses the reaction ADP(out) + phosphate(in) + H(+)(out) = ADP(in) + phosphate(out) + H(+)(in). The catalysed reaction is AMP(out) + phosphate(in) = AMP(in) + phosphate(out). The enzyme catalyses phosphate(in) + ATP(out) + 2 H(+)(out) = phosphate(out) + ATP(in) + 2 H(+)(in). It carries out the reaction dADP(in) + ADP(out) = dADP(out) + ADP(in). It catalyses the reaction Mg(2+)(in) + ADP(out) + ATP(in) + H(+)(out) = Mg(2+)(out) + ADP(in) + ATP(out) + H(+)(in). The catalysed reaction is ADP(out) + diphosphate(in) = ADP(in) + diphosphate(out). The enzyme catalyses dAMP(in) + ADP(out) + H(+)(out) = dAMP(out) + ADP(in) + H(+)(in). It carries out the reaction 3'-AMP(in) + ADP(out) + H(+)(out) = 3'-AMP(out) + ADP(in) + H(+)(in). It catalyses the reaction dAMP(out) + phosphate(in) = dAMP(in) + phosphate(out). The catalysed reaction is 3'-AMP(out) + phosphate(in) = 3'-AMP(in) + phosphate(out). The enzyme catalyses dADP(out) + phosphate(in) + H(+)(out) = dADP(in) + phosphate(out) + H(+)(in). Activated by an increase in cytosolic calcium levels that induce a conformational change of the N-terminal regulatory domain, uncapping the channel and allowing transport. Inhibited by bathophenanthroline, mersalyl, p-hydroxymercuribenzoate, bromcresol purple and tannic acid. In terms of biological role, electroneutral antiporter that mediates the transport of adenyl nucleotides through the inner mitochondrial membrane. Originally identified as an ATP-magnesium/inorganic phosphate antiporter, it also acts as a broad specificity adenyl nucleotide antiporter. By regulating the mitochondrial matrix adenyl nucleotide pool could adapt to changing cellular energetic demands and indirectly regulate adenyl nucleotide-dependent metabolic pathways. The chain is Mitochondrial adenyl nucleotide antiporter SLC25A24-A (slc25a24-a) from Xenopus laevis (African clawed frog).